Reading from the N-terminus, the 1961-residue chain is Ankyrin-3 (1961 aa).

Positions 1–10 are enriched in basic and acidic residues; sequence MSEEPKEKPA. Residues 1-25 form a disordered region; it reads MSEEPKEKPAKPAHRKRKGKKSDAN. Residues 11-20 show a composition bias toward basic residues; sequence KPAHRKRKGK. Serine 22 is modified (phosphoserine). ANK repeat units follow at residues 56–85, 89–118, 122–151, 155–184, 186–213, 217–246, 250–279, 283–312, 316–345, 349–378, 382–411, 415–444, 448–477, 481–510, 514–543, 547–576, 580–609, 613–642, 646–675, 679–708, 712–741, 745–774, and 778–807; these read NGLNALHLASKEGHVEVVSELLQREANVDA, KGNTALHIASLAGQAEVVKVLVTNGANVNA, NGFTPLYMAAQENHLEVVRFLLDNGASQSL, DGFTPLAVALQQGHDQVVSLLLENDTKGKV, LPALHIAARKDDTKAAALLLQNDTNADV, SGFTPLHIAAHYGNINVATLLLNRAAAVDF, NDITPLHVASKRGNANMVKLLLDRGAKIDA, DGLTPLHCGARSGHEQVVEMLLDRSAPILS, NGLSPLHMATQGDHLNCVQLLLQHNVPVDD, DYLTALHVAAHCGHYKVAKVLLDKKASPNA, NGFTPLHIACKKNRIRVMELLLKHGASIQA, SGLTPIHVAAFMGHVNIVSQLMHHGASPNT, RGETALHMAARSGQAEVVRYLVQDGAQVEA, DDQTPLHISARLGKADIVQQLLQQGASPNA, SGYTPLHLAAREGHEDVAAFLLDHGASLSI, KGFTPLHVAAKYGKLEVASLLLQKSASPDA, SGLTPLHVAAHYDNQKVALLLLDQGASPHA, NGYTPLHIAAKKNQMDIATSLLEYGADANA, QGIASVHLAAQEGHVDMVSLLLSRNANVNL, SGLTPLHLAAQEDRVNVAEVLVNQGAHVDA, MGYTPLHVGCHYGNIKIVNFLLQHSAKVNA, NGYTALHQAAQQGHTHIINVLLQNNASPNE, and NGNTALAIARRLGYISVVDTLKVVTEEIMT. Position 606 is a phosphoserine (serine 606). A Phosphoserine modification is found at leucine 732. A phosphoserine mark is found at serine 830, serine 844, serine 850, serine 873, serine 914, serine 917, serine 923, serine 958, serine 960, and serine 1114. 2 consecutive ZU5 domains span residues 985–1140 and 1142–1289; these read FLVS…VVSR and KQES…LADC. The UPA domain stretch occupies residues 1274-1408; it reads VSFTTNVSAR…SIKIRDTSQE (135 aa). A phosphoserine mark is found at serine 1451, serine 1462, serine 1470, serine 1473, and glycine 1560. The Death domain maps to 1478–1562; sequence TDIRMAIVAD…DIVTLLEGPI (85 aa). Disordered regions lie at residues 1606–1678, 1698–1740, 1784–1818, 1844–1884, and 1915–1961; these read PNPF…DPLD, SVPG…VTED, WQNETPSGSLESPAQARRLTGGLLDRLDDSSDQAR, PEAK…PVSP, and MTRT…KKTH. Over residues 1725-1740 the composition is skewed to basic and acidic residues; sequence QQEKGKSGPDEEVTED. Residues 1784–1795 are compositionally biased toward polar residues; that stretch reads WQNETPSGSLES. Phosphoserine occurs at positions 1795, 1813, and 1883. The segment covering 1808–1818 has biased composition (basic and acidic residues); the sequence is DRLDDSSDQAR. Basic and acidic residues predominate over residues 1933–1961; the sequence is GSTRSEPKQGEGYKVKTKKEIRNVEKKTH.

As to quaternary structure, may be a constituent of a NFASC/NRCAM/ankyrin G complex. Interacts with RHBG. Directly interacts with DMD and betaDAG1; this interaction does not interfere with DMD-binding and is required for DMD and betaDAG1 retention at costameres. Interacts (via N-terminal ANK repeats) with SCHIP1 isoform 7 (via C-terminus); this interaction is required for the localization at axon initial segments (AISs) and nodes of Ranvier (NRs). Interacts with PLEC and FLNC. Interacts with KCNA1; this inhibits channel activity. Interacts with SCN5A. Interacts with PKP2 and GJA1/CX43. As to expression, expressed in many epithelial tissues, muscles and axons. Expressed in kidney, brain, skin, lung, liver, intestine, pancreas, heart and testis (at protein level). In testis, expressed in Leydig cells, but very weakly or not at all in Sertoli cells or seminiferous tubules. Expressed in macrophages (at protein level).

The protein localises to the cytoplasm. Its subcellular location is the cytoskeleton. It localises to the cell projection. The protein resides in the axon. It is found in the cell membrane. The protein localises to the sarcolemma. Its subcellular location is the postsynaptic cell membrane. It localises to the lysosome. The protein resides in the T-tubule. Functionally, membrane-cytoskeleton linker. May participate in the maintenance/targeting of ion channels and cell adhesion molecules at the nodes of Ranvier and axonal initial segments. In skeletal muscle, required for costamere localization of DMD and betaDAG1. Regulates KCNA1 channel activity in function of dietary Mg(2+) levels, and thereby contributes to the regulation of renal Mg(2+) reabsorption. Required for intracellular adhesion and junctional conductance in myocytes, potentially via stabilization of GJA1/CX43 protein abundance and promotion of PKP2, GJA1/CX43, and SCN5A/Nav1.5 localization to cell-cell junctions. This is Ankyrin-3 (Ank3) from Mus musculus (Mouse).